We begin with the raw amino-acid sequence, 181 residues long: Ribulose bisphosphate carboxylase small subunit 3B, chloroplastic (181 aa).

A chloroplast-targeting transit peptide spans 1 to 54; that stretch reads MASSMLSSAAVVTSPAQATMVAPFTGLKSSAAFPVTRKTNKDITSIASNGGRVS.

Belongs to the RuBisCO small chain family. As to quaternary structure, heterohexadecamer of 8 large and 8 small subunits.

The protein resides in the plastid. It is found in the chloroplast. RuBisCO catalyzes two reactions: the carboxylation of D-ribulose 1,5-bisphosphate, the primary event in carbon dioxide fixation, as well as the oxidative fragmentation of the pentose substrate. Both reactions occur simultaneously and in competition at the same active site. Although the small subunit is not catalytic it is essential for maximal activity. The sequence is that of Ribulose bisphosphate carboxylase small subunit 3B, chloroplastic (RBCS-3B) from Arabidopsis thaliana (Mouse-ear cress).